The sequence spans 310 residues: tRNA uridine(34) hydroxylase (310 aa).

The region spanning 123–217 (ADPDVVVIDV…YLEKVPEDES (95 aa)) is the Rhodanese domain. The active-site Cysteine persulfide intermediate is the Cys177.

This sequence belongs to the TrhO family.

It carries out the reaction uridine(34) in tRNA + AH2 + O2 = 5-hydroxyuridine(34) in tRNA + A + H2O. In terms of biological role, catalyzes oxygen-dependent 5-hydroxyuridine (ho5U) modification at position 34 in tRNAs. This chain is tRNA uridine(34) hydroxylase, found in Acaryochloris marina (strain MBIC 11017).